A 177-amino-acid polypeptide reads, in one-letter code: 2''-aminoglycoside nucleotidyltransferase (177 aa).

An N-terminal domain region spans residues 1–92 (MDTTQVTLIH…ELLDCEPAWW (92 aa)). The Mg(2+) site is built by D44, D46, and D86. D86 functions as the Proton acceptor in the catalytic mechanism. Residues 93 to 177 (ADEAYEIAEA…RAAFRSRYAA (85 aa)) are C-terminal domain. A100 contacts kanamycin A.

Monomer. Mg(2+) is required as a cofactor.

It catalyses the reaction nucleoside triphosphate + gentamicin = diphosphate + 2''-nucleotidylgentamicin.. Mediates bacterial resistance to kanamycin, gentamicin, dibekacin, sisomicin and tobramycin by adenylating the 2''-hydroxyl group of these antibiotics. The chain is 2''-aminoglycoside nucleotidyltransferase from Klebsiella pneumoniae.